A 150-amino-acid polypeptide reads, in one-letter code: MSIVDNKKAFFDYFIEERFEAGLVLEGWEVKAIRAGRVHVKEAYVVIRKAELFLIGCHITPLLSASTHIVPDSTRTRKLLLNAIEIRKLIGKVEQKGYTLVPLNLHFTKGNVKCEIGLARGKKQHDKRAATKEREWEVQKGRIARGDLNA.

This sequence belongs to the SmpB family.

Its subcellular location is the cytoplasm. In terms of biological role, required for rescue of stalled ribosomes mediated by trans-translation. Binds to transfer-messenger RNA (tmRNA), required for stable association of tmRNA with ribosomes. tmRNA and SmpB together mimic tRNA shape, replacing the anticodon stem-loop with SmpB. tmRNA is encoded by the ssrA gene; the 2 termini fold to resemble tRNA(Ala) and it encodes a 'tag peptide', a short internal open reading frame. During trans-translation Ala-aminoacylated tmRNA acts like a tRNA, entering the A-site of stalled ribosomes, displacing the stalled mRNA. The ribosome then switches to translate the ORF on the tmRNA; the nascent peptide is terminated with the 'tag peptide' encoded by the tmRNA and targeted for degradation. The ribosome is freed to recommence translation, which seems to be the essential function of trans-translation. This is SsrA-binding protein from Polynucleobacter asymbioticus (strain DSM 18221 / CIP 109841 / QLW-P1DMWA-1) (Polynucleobacter necessarius subsp. asymbioticus).